The primary structure comprises 752 residues: MAP/microtubule affinity-regulating kinase 4 (752 aa).

A disordered region spans residues Met1–Arg36. Positions Tyr59–Ile310 constitute a Protein kinase domain. Residues Ile65–Val73 and Lys88 contribute to the ATP site. Residue Asp181 is the Proton acceptor of the active site. Position 214 is a phosphothreonine; by LKB1 (Thr214). The UBA domain occupies Glu324–Gly368. The disordered stretch occupies residues Ala385–Leu615. A compositionally biased stretch (low complexity) spans Ser391 to Asn406. Phosphoserine occurs at positions 423 and 543. Residues Pro544–Ser553 show a composition bias toward low complexity. Residues Ala703–Leu752 form the KA1 domain.

It belongs to the protein kinase superfamily. CAMK Ser/Thr protein kinase family. SNF1 subfamily. Interacts with MAPT/TAU. Interacts with gamma-tubulin. Interacts with ODF2. Interacts with USP9X. Interacts with YWHAQ. Interacts with NLRP3; promoting NLRP3 recruitment to microtubule organizing center (MTOC). Mg(2+) serves as cofactor. Post-translationally, ubiquitinated with 'Lys-29'- and 'Lys-33'-linked polyubiquitins which appear to impede LKB1-mediated phosphorylation. Deubiquitinated by USP9X. In terms of processing, phosphorylated at Thr-214 by STK11/LKB1 in complex with STE20-related adapter-alpha (STRADA) pseudo kinase and CAB39. Phosphorylated throughout the cell cycle. As to expression, isoform 1 and isoform 2 show similar expression patterns in the central nervous system and are present in the same subsets of neurons including pyramidal and non-pyramidal neurons in the cerebral cortex and hippocampus, cerebellar Purkinje cells, and interneurons and motor neurons in the spinal cord but not in glial cells (at protein level). Isoform 2 is the major isoform in brain and cerebellum. Also expressed in spleen, liver, small intestine, colon, kidney, tongue, testis and lung. Isoform 1 and isoform 2 are expressed at similar levels in heart.

It is found in the cytoplasm. It localises to the cytoskeleton. The protein resides in the microtubule organizing center. Its subcellular location is the centrosome. The protein localises to the cilium axoneme. It is found in the cilium basal body. It localises to the cell projection. The protein resides in the dendrite. It carries out the reaction L-seryl-[protein] + ATP = O-phospho-L-seryl-[protein] + ADP + H(+). The catalysed reaction is L-threonyl-[protein] + ATP = O-phospho-L-threonyl-[protein] + ADP + H(+). Activated by phosphorylation on Thr-214. Functionally, serine/threonine-protein kinase. Phosphorylates the microtubule-associated protein MAPT/TAU. Also phosphorylates the microtubule-associated proteins MAP2 and MAP4. Involved in regulation of the microtubule network, causing reorganization of microtubules into bundles. Required for the initiation of axoneme extension during cilium assembly. Regulates the centrosomal location of ODF2 and phosphorylates ODF2 in vitro. Plays a role in cell cycle progression, specifically in the G1/S checkpoint. Reduces neuronal cell survival. Plays a role in energy homeostasis by regulating satiety and metabolic rate. Promotes adipogenesis by activating JNK1 and inhibiting the p38MAPK pathway, and triggers apoptosis by activating the JNK1 pathway. Phosphorylates mTORC1 complex member RPTOR and acts as a negative regulator of the mTORC1 complex, probably due to disruption of the interaction between phosphorylated RPTOR and the RRAGA/RRAGC heterodimer which is required for mTORC1 activation. Involved in NLRP3 positioning along microtubules by mediating NLRP3 recruitment to microtubule organizing center (MTOC) upon inflammasome activation. The polypeptide is MAP/microtubule affinity-regulating kinase 4 (Mus musculus (Mouse)).